A 409-amino-acid chain; its full sequence is F-box protein At3g17320 (409 aa).

The 47-residue stretch at 1–47 (MTKISDLPRDLAEEVLSRVPVTYLRAIRFTCKKWNTLTKRRSFTKKL) folds into the F-box domain.

This is F-box protein At3g17320 from Arabidopsis thaliana (Mouse-ear cress).